Consider the following 1174-residue polypeptide: Protein kinase C-like (1174 aa).

The REM-1 1 domain maps to 1-68 (MANVEETVAN…LRDLDLQRTT (68 aa)). Residues 69–84 (SGVDNMSLQPGRSPTN) show a composition bias toward polar residues. Positions 69–140 (SGVDNMSLQP…PPPATANKRP (72 aa)) are disordered. Residues 96 to 123 (GYAQQDQGGYGGPQSQYSQLSGGEALQP) are compositionally biased toward low complexity. Residues 124–134 (PRAPFAAPPPA) show a composition bias toward pro residues. The REM-1 2 domain occupies 149–226 (KYDTPHLGPR…LKRYEDLHVD (78 aa)). The 121-residue stretch at 229–349 (GDGDDNDSLD…MRRKKLETEL (121 aa)) folds into the C2 domain. The segment at 358 to 406 (DKMGGHTGIQPDMQFQPPPGQSPAGGPGGGPTPAGVRPPGAPQPQTGPI) is disordered. A compositionally biased stretch (gly residues) spans 380–389 (PAGGPGGGPT). 2 consecutive Phorbol-ester/DAG-type zinc fingers follow at residues 458-506 (GHKF…VTKC) and 526-576 (PHRF…PDFC). The segment at 593–842 (TRRGQSSSGP…PAANTQGTGK (250 aa)) is disordered. Residues 596–611 (GQSSSGPGMSQRTLRP) show a composition bias toward polar residues. Residues 624–636 (QSPGQPGQESPTQ) show a composition bias toward low complexity. The segment covering 648–657 (SPPPGPPRQP) has biased composition (pro residues). A compositionally biased stretch (low complexity) spans 658–709 (SYPSSATSVDAARASYSTTGTASTGAPTSPTSGSRPPSGPRTQSSVAAAAAA). Residues 720 to 744 (RSNTDYSPQSGRSSGSGYPTEQRMS) are compositionally biased toward polar residues. The span at 786-802 (LPQPPPPQSPPQHPQQP) shows a compositional bias: pro residues. Residues 808–820 (KMPEQQALTQQPP) are compositionally biased toward polar residues. In terms of domain architecture, Protein kinase spans 849–1108 (FNFLAVLGKG…AQEIMSHAFF (260 aa)). ATP-binding positions include 855-863 (LGKGNFGKV) and K878. D974 acts as the Proton acceptor in catalysis. The AGC-kinase C-terminal domain maps to 1109–1174 (RNINWDDIYH…RGFSYSADFA (66 aa)).

Belongs to the protein kinase superfamily. AGC Ser/Thr protein kinase family. PKC subfamily.

It carries out the reaction L-seryl-[protein] + ATP = O-phospho-L-seryl-[protein] + ADP + H(+). The enzyme catalyses L-threonyl-[protein] + ATP = O-phospho-L-threonyl-[protein] + ADP + H(+). The sequence is that of Protein kinase C-like (PKC1) from Cochliobolus heterostrophus (Southern corn leaf blight fungus).